The sequence spans 417 residues: Methyltransferase/ribosomally synthesized cyclic peptide dendrothelin A precursor dbihMA (417 aa).

Positions 1 to 251 are methyltransferase domain; it reads MESSTQTKPG…GVSTFYIPPK (251 aa). Residues R72, Y76, and Y98 contribute to the active site. The S-adenosyl-L-methionine site is built by Y98, H100, V103, A130, Q172, A213, S244, and T245. A clasp domain region spans residues 252–378; that stretch reads ARKDINTDII…WAIRCAMKNM (127 aa). Residues 379-399 are precursor leader; that stretch reads PSSLLEAASQSVEEASMNGFP. N-methylvaline occurs at positions 401 and 403. T404 carries the N-methylthreonine modification. The residue at position 405 (G405) is an N-methylglycine. I406 is modified (N-methylisoleucine). Residue V407 is modified to N-methylvaline. G408 is subject to N-methylglycine. N-methylisoleucine is present on I410. G411 carries the post-translational modification N-methylglycine. N-methylvaline is present on V413.

In the N-terminal section; belongs to the precorrin methyltransferase family. In terms of assembly, homodimer. Post-translationally, dbiMA automethylates at Val-401, Val-403, Thr-404, Gly-405, Ile-406, Val-407, Gly-408, Ile-410, Gly-411 and Val-413 before being processed by the prolyloligopeptidase dbiP which likely forms a peptidyl ester upon removal of the follower propeptide, which then undergoes macrocyclization with the N-terminus of the modified core peptide. Peptide backbone alpha-N-methylations change the physicochemical properties of amide bonds to provide structural constraints and other favorable characteristics including biological membrane permeability to peptides.

It participates in mycotoxin biosynthesis. In terms of biological role, fusion protein of the methyltransferase dbiM and the dendrothelin core peptide; part of the gene cluster that mediates the biosynthesis of dendrothelin A, a highly methylated cyclic dodecapeptide showing slight nematodicidal activity. Dendrothelin A derives from the C-terminus of the dbiMA protein, and it is the dbiMA protein that methylates its own C-terminus using S-adenosyl methionine (SAM). The C-terminus is subsequently cleaved off and macrocyclized by the prolyloligopeptidase dbiP to give the final product. In Dendrothele bispora (strain CBS 962.96), this protein is Methyltransferase/ribosomally synthesized cyclic peptide dendrothelin A precursor dbihMA.